Here is a 153-residue protein sequence, read N- to C-terminus: uncharacterized protein (153 aa).

Its subcellular location is the mitochondrion. This is an uncharacterized protein from Arabidopsis thaliana (Mouse-ear cress).